We begin with the raw amino-acid sequence, 259 residues long: MADS-box protein ZMM17 (259 aa).

The 61-residue stretch at 1–61 (MGRGKIEIKR…GKMFEYCSPA (61 aa)) folds into the MADS-box domain. Residues 85–175 (DQQILLEMTR…YRMINENQQA (91 aa)) form the K-box domain. The disordered stretch occupies residues 237–259 (PTQPNLQDPAAPCGGLHGHGLQL).

As to expression, strong expression in female inflorescences (ears), but also weak expression in male inflorescences (tassels). At early stages of the development of the female spiklet, expressed in all organ primordia but later restricted to the ovule and the developing silk. At very late stages of development, expression becomes restricted to parts of the silk.

The protein resides in the nucleus. Functionally, probable transcription factor. The chain is MADS-box protein ZMM17 (M17) from Zea mays (Maize).